We begin with the raw amino-acid sequence, 148 residues long: UPF0179 protein UNCMA_27840 (148 aa).

The protein belongs to the UPF0179 family.

The sequence is that of UPF0179 protein UNCMA_27840 from Methanocella arvoryzae (strain DSM 22066 / NBRC 105507 / MRE50).